We begin with the raw amino-acid sequence, 399 residues long: MIIEDVHYRVVFDSRGNETVECEVVAGEVVAKAMAPSGASTGSGEAVVVSPYRYEEIEEEVSKAIIGMSVFDQESVDEALRELDGTDNFSRIGGNFAITASLAVAKAAAEILGLPLYAYVGGVFAKELPYPLGNVIGGGRHAEGSTSIQEFLVIPVGAKTFFEAQRANAAVHKQLKKIFKERGIFAAKGDEGAWAAQISDEQAFEILSEAIQRVEDELGVKVRMGIDVAATELWDGERYVYSDRKLTTEEQIAYMAELADRYDLLYIEDPLHEKDFEGFAELTKQVKCMVCGDDIFVTNPEIIKKGIEVGAANTVLIKPNQNGTLSGTAKAVKIAKDNGYSVVVSHRSGETEDETLAHLAVAFNAKLIKTGVVGGERISKLNELIRIEELMDKPRMVMI.

Q149 lines the (2R)-2-phosphoglycerate pocket. E191 functions as the Proton donor in the catalytic mechanism. Mg(2+) is bound by residues D227, E268, and D293. The (2R)-2-phosphoglycerate site is built by K318, R347, S348, and K369. K318 acts as the Proton acceptor in catalysis.

The protein belongs to the enolase family. Mg(2+) is required as a cofactor.

The protein resides in the cytoplasm. It is found in the secreted. The protein localises to the cell surface. The catalysed reaction is (2R)-2-phosphoglycerate = phosphoenolpyruvate + H2O. It participates in carbohydrate degradation; glycolysis; pyruvate from D-glyceraldehyde 3-phosphate: step 4/5. In terms of biological role, catalyzes the reversible conversion of 2-phosphoglycerate (2-PG) into phosphoenolpyruvate (PEP). It is essential for the degradation of carbohydrates via glycolysis. This is Enolase from Archaeoglobus fulgidus (strain ATCC 49558 / DSM 4304 / JCM 9628 / NBRC 100126 / VC-16).